The following is a 347-amino-acid chain: Selenide, water dikinase (347 aa).

C17 is a catalytic residue. ATP contacts are provided by residues K20 and 48 to 50 (TRD). D51 contacts Mg(2+). Residues D68, D91, and 139 to 141 (GHS) each bind ATP. D91 contacts Mg(2+). D227 is a Mg(2+) binding site.

The protein belongs to the selenophosphate synthase 1 family. Class I subfamily. As to quaternary structure, homodimer. It depends on Mg(2+) as a cofactor.

The catalysed reaction is hydrogenselenide + ATP + H2O = selenophosphate + AMP + phosphate + 2 H(+). Synthesizes selenophosphate from selenide and ATP. The polypeptide is Selenide, water dikinase (Salmonella typhi).